Here is a 70-residue protein sequence, read N- to C-terminus: uncharacterized protein (70 aa).

This is an uncharacterized protein from Treponema pallidum (strain Nichols).